A 922-amino-acid polypeptide reads, in one-letter code: Pertactin autotransporter (922 aa).

An N-terminal signal peptide occupies residues methionine 1 to alanine 34. The Cell attachment site; involved in adhesion to various eukaryotic cell lines motif lies at arginine 260–aspartate 262. Repeat copies occupy residues glycine 266–proline 270, glycine 271–proline 275, and glycine 276–proline 280. The segment at glycine 266 to tryptophan 290 is 4 X 5 AA tandem repeats of G-G-A-V-P. One copy of the 4; approximate repeat lies at glycine 281 to proline 285. The interval serine 561–serine 619 is disordered. Residues proline 568–proline 613 are compositionally biased toward pro residues. Positions proline 575–arginine 603 are 9 X 3 AA approximate repeats of P-Q-P. Residues leucine 654–tryptophan 922 form the Autotransporter domain.

Monomer.

It is found in the periplasm. The protein localises to the secreted. The protein resides in the cell surface. Its subcellular location is the cell outer membrane. Agglutinogen that binds to eukaryotic cells; a process mediated by the R-G-D sequence. Pertactin may have a role in bacterial adhesion, and thus play a role in virulence. May contribute to the disease state of whooping cough. The protein is Pertactin autotransporter (prn) of Bordetella parapertussis (strain 12822 / ATCC BAA-587 / NCTC 13253).